Here is a 1030-residue protein sequence, read N- to C-terminus: Protein phosphatase 1 regulatory subunit 12A (1030 aa).

Positions 35–38 (KVKF) match the KVKF motif motif. 6 ANK repeats span residues 39 to 68 (DDGA…DINY), 72 to 101 (DGLT…NINQ), 105 to 134 (EGWI…HVGA), 138 to 164 (EGDT…RQGV), 198 to 227 (SGGT…DVNI), and 231 to 260 (DGWT…DMEM). A (3S)-3-hydroxyasparagine; by HIF1AN; partial mark is found at Asn-67 and Asn-100. The residue at position 226 (Asn-226) is a (3S)-3-hydroxyasparagine; by HIF1AN; partial. 2 disordered regions span residues 290–628 (LHSE…SVPT) and 643–928 (ASTT…EKDD). The segment covering 291–300 (HSEKRDKKSP) has biased composition (basic and acidic residues). At Ser-299 the chain carries Phosphoserine. A compositionally biased stretch (polar residues) spans 302-316 (IESTANMDNNQSQKT). The segment covering 318 to 340 (KNKETLIIEPEKNASRIESLEQE) has biased composition (basic and acidic residues). A compositionally biased stretch (acidic residues) spans 357-369 (SEEDEEDDSESEA). Over residues 385–402 (TSSTQAAPVAVTTPTVSS) the composition is skewed to low complexity. 2 positions are modified to phosphoserine: Ser-422 and Ser-432. Basic and acidic residues predominate over residues 422-432 (SPKEEERKDES). The residue at position 443 (Thr-443) is a Phosphothreonine. Ser-445 is subject to Phosphoserine; by NUAK1. Tyr-446 bears the Phosphotyrosine mark. Residues 469-480 (RSASSPRLSSSL) are compositionally biased toward low complexity. Residue Ser-472 is modified to Phosphoserine; by NUAK1. Position 473 is a phosphoserine; by CDK1 (Ser-473). A Phosphoserine modification is found at Ser-477. Positions 481-491 (DNKEKEKDSKG) are enriched in basic and acidic residues. Residues Ser-507 and Ser-509 each carry the phosphoserine modification. The span at 540–551 (NSSVNEGSTYHK) shows a compositional bias: polar residues. Residues 564–610 (SSSVPSTTSTPTVTSAAGLQKSLLSSTSTTTKITTGSSSAGTQSSTS) are compositionally biased toward low complexity. Residues Ser-601 and Ser-618 each carry the phosphoserine modification. Residues 614-625 (WAEDSTEKEKDS) are compositionally biased toward basic and acidic residues. Over residues 643–660 (ASTTTLTTTTAGTVSSTT) the composition is skewed to low complexity. Positions 673 to 682 (VRDEESESQR) are enriched in basic and acidic residues. The segment at 682–864 (RKARSRQARQ…VSFWTQDSDE (183 aa)) is interaction with ROCK2. Residues 683-693 (KARSRQARQSR) show a composition bias toward basic residues. A phosphoserine; by PKA and PKG; in vitro mark is found at Ser-692 and Ser-695. Residue Thr-696 is modified to Phosphothreonine; by ROCK1, ROCK2, CDC42BP, ZIPK/DAPK3 and RAF1. Positions 718-767 (RTREQENEEKEKEEKEKQDKEKQEEKKESETSREDEYKQKYSRTYDETYQ) are enriched in basic and acidic residues. A compositionally biased stretch (low complexity) spans 773 to 795 (STSSSTTPSSSLSTMSSSLYASS). Positions 796–810 (QLNRPNSLVGITSAY) are enriched in polar residues. Ser-802 carries the post-translational modification Phosphoserine. A compositionally biased stretch (basic and acidic residues) spans 814-840 (ITKENEREGEKREEEKEGEDKSQPKSI). Residues 841–852 (RERRRPREKRRS) show a composition bias toward basic residues. Position 852 is a phosphoserine; by ROCK2 (Ser-852). The span at 861-875 (DSDENEQEQQSDTEE) shows a compositional bias: acidic residues. A phosphoserine mark is found at Ser-862 and Ser-871. Polar residues predominate over residues 884 to 897 (TDSISRYETSSTSA). 2 positions are modified to phosphoserine: Ser-903 and Ser-908. The span at 903 to 913 (SLLGRSGSYSY) shows a compositional bias: low complexity. Position 910 is a phosphoserine; by NUAK1 (Ser-910). Residues 914 to 928 (LEERKPYSSRLEKDD) show a composition bias toward basic and acidic residues. Ser-995 carries the post-translational modification Phosphoserine.

PP1 comprises a catalytic subunit, PPP1CA, PPP1CB or PPP1CC, and one or several targeting or regulatory subunits. PPP1R12A mediates binding to myosin. Interacts with ARHA and CIT. Binds PPP1R12B, ROCK1 and IL16. Interacts directly with PRKG1. Non-covalent dimer of 2 dimers; PRKG1-PRKG1 and PPP1R12A-PPP1R12A. Interacts with SMTNL1. Interacts with PPP1CB; the interaction is direct. Interacts (when phosphorylated at Ser-445, Ser-472 and Ser-910) with 14-3-3. Interacts with ROCK1 and ROCK2. Interacts with isoform 1 and isoform 2 of ZIPK/DAPK3. Interacts with RAF1. Interacts with HIF1AN. Interacts with NCKAP1L. Phosphorylated by CIT (Rho-associated kinase). Phosphorylated cooperatively by ROCK1 and CDC42BP on Thr-696. Phosphorylated on upon DNA damage, probably by ATM or ATR. In vitro, phosphorylation of Ser-695 by PKA and PKG appears to prevent phosphorylation of the inhibitory site Thr-696, probably mediated by PRKG1. Phosphorylation at Ser-445, Ser-472 and Ser-910 by NUAK1 promotes interaction with 14-3-3, leading to inhibit interaction with myosin light chain MLC2, preventing dephosphorylation of MLC2. May be phosphorylated at Thr-696 by DMPK; may inhibit the myosin phosphatase activity. Phosphorylated at Ser-473 by CDK1 during mitosis, creating docking sites for the POLO box domains of PLK1. Subsequently, PLK1 binds and phosphorylates PPP1R12A. Expressed in striated muscles, specifically in type 2a fibers (at protein level).

Its subcellular location is the cytoplasm. The protein localises to the cytoskeleton. It localises to the stress fiber. In terms of biological role, key regulator of protein phosphatase 1C (PPP1C). Mediates binding to myosin. As part of the PPP1C complex, involved in dephosphorylation of PLK1. Capable of inhibiting HIF1AN-dependent suppression of HIF1A activity. This chain is Protein phosphatase 1 regulatory subunit 12A, found in Homo sapiens (Human).